We begin with the raw amino-acid sequence, 728 residues long: Glutamate--cysteine ligase (728 aa).

The interval 517-552 (PVRTTRRGGSASRSASGTSTPNSGSSRPATPPLGPV) is disordered. Over residues 523 to 536 (RGGSASRSASGTST) the composition is skewed to low complexity.

The protein belongs to the glutamate--cysteine ligase type 3 family.

It catalyses the reaction L-cysteine + L-glutamate + ATP = gamma-L-glutamyl-L-cysteine + ADP + phosphate + H(+). Its pathway is sulfur metabolism; glutathione biosynthesis; glutathione from L-cysteine and L-glutamate: step 1/2. This chain is Glutamate--cysteine ligase (gcs-1), found in Neurospora crassa (strain ATCC 24698 / 74-OR23-1A / CBS 708.71 / DSM 1257 / FGSC 987).